Consider the following 565-residue polypeptide: Urocanate hydratase (565 aa).

Residues 58–59, Q136, 182–184, E202, R207, 245–246, 266–270, 276–277, and Y325 contribute to the NAD(+) site; these read GG, GMG, NA, QTSAH, and YL. The active site involves C413. NAD(+) is bound at residue G495.

The protein belongs to the urocanase family. The cofactor is NAD(+).

It is found in the cytoplasm. The catalysed reaction is 4-imidazolone-5-propanoate = trans-urocanate + H2O. It functions in the pathway amino-acid degradation; L-histidine degradation into L-glutamate; N-formimidoyl-L-glutamate from L-histidine: step 2/3. Functionally, catalyzes the conversion of urocanate to 4-imidazolone-5-propionate. This Vibrio vulnificus (strain YJ016) protein is Urocanate hydratase.